The primary structure comprises 593 residues: Uroporphyrinogen-III C-methyltransferase (593 aa).

The disordered stretch occupies residues 278-303 (ETSSSPNKKTKQETVTEGVVPPTDEN).

The protein belongs to the precorrin methyltransferase family.

The catalysed reaction is uroporphyrinogen III + 2 S-adenosyl-L-methionine = precorrin-2 + 2 S-adenosyl-L-homocysteine + H(+). Functionally, siroheme synthase involved in methionine biosynthesis. The chain is Uroporphyrinogen-III C-methyltransferase from Saccharomyces cerevisiae (strain ATCC 204508 / S288c) (Baker's yeast).